The sequence spans 206 residues: Thymidylate kinase (206 aa).

10–17 provides a ligand contact to ATP; that stretch reads GNDGSGKS.

This sequence belongs to the thymidylate kinase family.

It carries out the reaction dTMP + ATP = dTDP + ADP. Its function is as follows. Phosphorylation of dTMP to form dTDP in both de novo and salvage pathways of dTTP synthesis. In Caldicellulosiruptor saccharolyticus (strain ATCC 43494 / DSM 8903 / Tp8T 6331), this protein is Thymidylate kinase.